The primary structure comprises 151 residues: Metallothiol transferase FosB (151 aa).

Residues 4–119 (SINHVTYSVS…DGHKFELHTG (116 aa)) enclose the VOC domain. The Mg(2+) site is built by His-7, His-66, and Glu-115. Glu-115 acts as the Proton donor/acceptor in catalysis.

It belongs to the fosfomycin resistance protein family. FosB subfamily. As to quaternary structure, homodimer. Requires Mg(2+) as cofactor.

It is found in the cytoplasm. In terms of biological role, metallothiol transferase which confers resistance to fosfomycin by catalyzing the addition of a thiol cofactor to fosfomycin. L-cysteine is probably the physiological thiol donor. The chain is Metallothiol transferase FosB from Staphylococcus saprophyticus subsp. saprophyticus (strain ATCC 15305 / DSM 20229 / NCIMB 8711 / NCTC 7292 / S-41).